The following is a 364-amino-acid chain: Aminomethyltransferase (364 aa).

This sequence belongs to the GcvT family. As to quaternary structure, the glycine cleavage system is composed of four proteins: P, T, L and H.

The catalysed reaction is N(6)-[(R)-S(8)-aminomethyldihydrolipoyl]-L-lysyl-[protein] + (6S)-5,6,7,8-tetrahydrofolate = N(6)-[(R)-dihydrolipoyl]-L-lysyl-[protein] + (6R)-5,10-methylene-5,6,7,8-tetrahydrofolate + NH4(+). Functionally, the glycine cleavage system catalyzes the degradation of glycine. This Shewanella sp. (strain ANA-3) protein is Aminomethyltransferase.